Consider the following 340-residue polypeptide: Ketol-acid reductoisomerase (NADP(+)) (340 aa).

Residues V3–T182 form the KARI N-terminal Rossmann domain. NADP(+) is bound by residues Y26–Q29, R49, S53, and D83–Q86. The active site involves H108. Residue G134 participates in NADP(+) binding. Positions T183–V328 constitute a KARI C-terminal knotted domain. Mg(2+) is bound by residues D191, E195, E227, and E231. Substrate is bound at residue S252.

It belongs to the ketol-acid reductoisomerase family. It depends on Mg(2+) as a cofactor.

It carries out the reaction (2R)-2,3-dihydroxy-3-methylbutanoate + NADP(+) = (2S)-2-acetolactate + NADPH + H(+). The enzyme catalyses (2R,3R)-2,3-dihydroxy-3-methylpentanoate + NADP(+) = (S)-2-ethyl-2-hydroxy-3-oxobutanoate + NADPH + H(+). It functions in the pathway amino-acid biosynthesis; L-isoleucine biosynthesis; L-isoleucine from 2-oxobutanoate: step 2/4. The protein operates within amino-acid biosynthesis; L-valine biosynthesis; L-valine from pyruvate: step 2/4. Functionally, involved in the biosynthesis of branched-chain amino acids (BCAA). Catalyzes an alkyl-migration followed by a ketol-acid reduction of (S)-2-acetolactate (S2AL) to yield (R)-2,3-dihydroxy-isovalerate. In the isomerase reaction, S2AL is rearranged via a Mg-dependent methyl migration to produce 3-hydroxy-3-methyl-2-ketobutyrate (HMKB). In the reductase reaction, this 2-ketoacid undergoes a metal-dependent reduction by NADPH to yield (R)-2,3-dihydroxy-isovalerate. This Streptococcus pneumoniae (strain JJA) protein is Ketol-acid reductoisomerase (NADP(+)).